We begin with the raw amino-acid sequence, 143 residues long: Nucleoside diphosphate kinase (143 aa).

ATP contacts are provided by Lys-11, Phe-59, Arg-87, Thr-93, Arg-104, and Asn-114. Catalysis depends on His-117, which acts as the Pros-phosphohistidine intermediate.

The protein belongs to the NDK family. In terms of assembly, homotetramer. Requires Mg(2+) as cofactor.

It is found in the cytoplasm. It catalyses the reaction a 2'-deoxyribonucleoside 5'-diphosphate + ATP = a 2'-deoxyribonucleoside 5'-triphosphate + ADP. It carries out the reaction a ribonucleoside 5'-diphosphate + ATP = a ribonucleoside 5'-triphosphate + ADP. In terms of biological role, major role in the synthesis of nucleoside triphosphates other than ATP. The ATP gamma phosphate is transferred to the NDP beta phosphate via a ping-pong mechanism, using a phosphorylated active-site intermediate. This Shewanella sp. (strain MR-4) protein is Nucleoside diphosphate kinase.